Here is a 462-residue protein sequence, read N- to C-terminus: ATP synthase subunit beta (462 aa).

An ATP-binding site is contributed by 151–158 (GGAGVGKT).

Belongs to the ATPase alpha/beta chains family. As to quaternary structure, F-type ATPases have 2 components, CF(1) - the catalytic core - and CF(0) - the membrane proton channel. CF(1) has five subunits: alpha(3), beta(3), gamma(1), delta(1), epsilon(1). CF(0) has four main subunits: a(1), b(1), b'(1) and c(9-12).

The protein resides in the cell inner membrane. The enzyme catalyses ATP + H2O + 4 H(+)(in) = ADP + phosphate + 5 H(+)(out). Produces ATP from ADP in the presence of a proton gradient across the membrane. The catalytic sites are hosted primarily by the beta subunits. The sequence is that of ATP synthase subunit beta from Chlorobium limicola (strain DSM 245 / NBRC 103803 / 6330).